The chain runs to 259 residues: Imidazole glycerol phosphate synthase subunit HisF (259 aa).

Active-site residues include D11 and D130.

The protein belongs to the HisA/HisF family. As to quaternary structure, heterodimer of HisH and HisF.

It is found in the cytoplasm. The catalysed reaction is 5-[(5-phospho-1-deoxy-D-ribulos-1-ylimino)methylamino]-1-(5-phospho-beta-D-ribosyl)imidazole-4-carboxamide + L-glutamine = D-erythro-1-(imidazol-4-yl)glycerol 3-phosphate + 5-amino-1-(5-phospho-beta-D-ribosyl)imidazole-4-carboxamide + L-glutamate + H(+). It functions in the pathway amino-acid biosynthesis; L-histidine biosynthesis; L-histidine from 5-phospho-alpha-D-ribose 1-diphosphate: step 5/9. Functionally, IGPS catalyzes the conversion of PRFAR and glutamine to IGP, AICAR and glutamate. The HisF subunit catalyzes the cyclization activity that produces IGP and AICAR from PRFAR using the ammonia provided by the HisH subunit. The polypeptide is Imidazole glycerol phosphate synthase subunit HisF (Chloroflexus aurantiacus (strain ATCC 29366 / DSM 635 / J-10-fl)).